The chain runs to 84 residues: Subtilisin-chymotrypsin inhibitor WSCI (84 aa).

Positions 1-12 are cleaved as a signal peptide; it reads MSSVVKKPLGGN. The tract at residues 1-28 is disordered; that stretch reads MSSVVKKPLGGNTDTGDHHNQKTEWPEL. Basic and acidic residues predominate over residues 15 to 25; sequence TGDHHNQKTEW.

As to quaternary structure, monomer.

Its subcellular location is the secreted. Its function is as follows. Inhibits B.lichenoformis subtilisin, B.subtilis subtilisin, bovine pancreatic alpha-chymotrypsin and porcine alpha-chymotrypsin with Ki of 3.92 nM, 5.70 nM, 7.24 nM and 9.35 nM respectively. B.lichenoformis subtilisin is inhibited with a molar ratio of 1:0.87. Also inhibits chymotrypsin-like activities from the digestive tracts of the insect larvae T.molitor, P.interpunctella and H.armigera. Does not inhibit bovine pancreatic trypsin, porcine pancreatic elastase, or human leukocyte elastase. The sequence is that of Subtilisin-chymotrypsin inhibitor WSCI from Triticum aestivum (Wheat).